Consider the following 513-residue polypeptide: Serine/threonine-protein kinase PBL27 (513 aa).

A disordered region spans residues 1–61 (MSGCLPCFGS…KKELTAPKEG (61 aa)). Residues C4 and C7 are each lipidated (S-palmitoyl cysteine). Composition is skewed to basic and acidic residues over residues 15 to 27 (AASK…ELSA) and 38 to 57 (ISLD…ELTA). The region spanning 83 to 360 (FRPECLLGEG…GDVVTALTYL (278 aa)) is the Protein kinase domain. ATP-binding positions include 89 to 97 (LGEGGFGRV) and K112. D210 serves as the catalytic Proton acceptor. S244 is subject to Phosphoserine; by CERK1. 2 positions are modified to phosphothreonine; by CERK1: T245 and T250. A compositionally biased stretch (polar residues) spans 365-378 (FDPNAPSGQNSRSG). The tract at residues 365 to 513 (FDPNAPSGQN…GPGSFDSTND (149 aa)) is disordered. S392 and S401 each carry phosphoserine. Over residues 417–428 (NSPDYRRRDMVR) the composition is skewed to basic and acidic residues. Residues 434-446 (SEGGSETGGGSGR) are compositionally biased toward gly residues. Over residues 456-473 (QESQRGSPASVGRSSRGT) the composition is skewed to polar residues. The segment covering 475–486 (RNRDLDRERAVA) has biased composition (basic and acidic residues). Residues 504-513 (GPGSFDSTND) show a composition bias toward polar residues.

Belongs to the protein kinase superfamily. Ser/Thr protein kinase family. As to quaternary structure, interacts with CERK1 (preferentially unphosphorylated) at the plasma membrane. Binds to MAPKKK5 at the plasma membrane; disassociation is induced by chitin perception by the CERK1 complex. Also associates with MAPKKK3. In terms of processing, phosphorylated by CERK1 upon elicitation by chitin. Palmitoylation at Cys-4 and Cys-7 are required for plasma membrane location.

It is found in the cell membrane. It carries out the reaction L-seryl-[protein] + ATP = O-phospho-L-seryl-[protein] + ADP + H(+). It catalyses the reaction L-threonyl-[protein] + ATP = O-phospho-L-threonyl-[protein] + ADP + H(+). Its function is as follows. Receptor-like cytoplasmic kinase involved in the transduction of signal between the host cell surface chitin receptor complex CERK1-LYK5 and the intracellular MAPKKK5-dependent mitogen-activated protein kinase (MAPK) cascade that leads to chitin-induced immunity. Phosphorylates and activates MAPKKK5 when phosphorylated by CERK1 after elicitation by chitin. In Arabidopsis thaliana (Mouse-ear cress), this protein is Serine/threonine-protein kinase PBL27.